We begin with the raw amino-acid sequence, 335 residues long: MSNKLCQLCNERRPALVRPKTGQKICKECFYYVFETEIHNVIIENKLFVRGERVGIGASGGKDSTVLAYVMKLLNERYDYGLELYLISVDEGIRGYRDDSLDTVKRNQQQYGLPMKIVSYADLYDGWTMDNVVARIGTKNNCTYCGVFRRQALDRAALSLDIHHLVTGHNADDIAETILMNLLRGDVARLPRSTEITTQSDSSPTKRSKPFKYSYEKEIVLYAHYKKLDYFSTECTYSPEAFRGTARAMIKQLENIRPSSILDIIYSGESMQLASSVQEQLPQQTTCERCGFISSNRICKACMLLEGLNKGITGLGLGSDRKTKKLQSQIPACAE.

The protein belongs to the TtcA family. CTU1/NCS6/ATPBD3 subfamily. Interacts with ctu2.

The protein localises to the cytoplasm. It participates in tRNA modification; 5-methoxycarbonylmethyl-2-thiouridine-tRNA biosynthesis. Its function is as follows. Plays a central role in 2-thiolation of mcm(5)S(2)U at tRNA wobble positions of tRNA(Lys), tRNA(Glu) and tRNA(Gln). Directly binds tRNAs and probably acts by catalyzing adenylation of tRNAs, an intermediate required for 2-thiolation. It is unclear whether it acts as a sulfurtransferase that transfers sulfur from thiocarboxylated urm1 onto the uridine of tRNAs at wobble position. Prior mcm(5) tRNA modification by the elongator complex is required for 2-thiolation. May also be involved in protein urmylation. The chain is Cytoplasmic tRNA 2-thiolation protein 1 (ncs6) from Schizosaccharomyces pombe (strain 972 / ATCC 24843) (Fission yeast).